A 163-amino-acid chain; its full sequence is Nucleotide-binding protein EAT1b_2037 (163 aa).

Belongs to the YajQ family.

Nucleotide-binding protein. This chain is Nucleotide-binding protein EAT1b_2037, found in Exiguobacterium sp. (strain ATCC BAA-1283 / AT1b).